An 869-amino-acid polypeptide reads, in one-letter code: MIDVISRYQASPLIESTLGYQSITIIFGNAHLQSSKKNVILAAMMRTRIPGLVPRICQTPLPWKPPTQLTRVRYARWSTSHAVSWFETGHIDLKENEGLLFINNIFPSKLQWLLRGPLGGMRSYEEAVKRIDRPQLAASDTFQIIQRVVPKNLNIQVKEVVPRFREGGAFVKYTRPSNVNDADIEASIKENLKEHPIRPWFNPFQEVQVCRVIGRPWIEDLYRLPSPRLKVAFHPVSPEASAADLNTETLYTLFRPYGKIRDIEKQPSDSKVTPRYAFVEFSRPKYAGMAKNCMHGFTVPEQEGGGKSGTRLKIKYERKIKLSMIKDWLLSHPRIVIPVLAALLAAITVTIFDPMRTFFIKLKIKSTLQTEENGVMQWIRKQVNKANIIYFGRKGADPRGLTAIWEDRQEDITRLQSWLMENVETFIVVHGPRGSGKRELVLDRALVDYKYKIVIDCKQIQDARGDSAKIARAASQVGYRPVFSWMNSISSFIDLAAQGMIGTKAGFSETLDAQLSNIWQNTATALKKVTLEHRKKNHKDSHLTDEEYLEAHPELRPVVVIDNYLHNASESSVVYDKITEWAAGLTAGNIAHVIFLTTDVSYAKPLSKALPNSVFRTITLGDCSLEVGRKFVVNHLAYESKDGKTQPRRAEELEDLDACIETLGGRVTDLEFMAHRIEAGETPRGAVNRIIEQSASEILKMFLLTPETIEQSWTHEQAWYLIKRLAESKDGALSYNEIVLSELFKENGEITLRALEHAELISIAAVNGCPQTIRPGKPVLRAAFKKVTENKALSSRMDLAIITQKINKENKSIGKYEEELSLLGSLPRQPRELTDRIQWVLNKVYSSQNKIAKYEKESAYLQKILRSEH.

Residues 227–319 form the RRM domain; it reads PRLKVAFHPV…TRLKIKYERK (93 aa). Residues 335-355 form a helical membrane-spanning segment; sequence IVIPVLAALLAAITVTIFDPM. Topologically, residues 356-869 are mitochondrial intermembrane; it reads RTFFIKLKIK…YLQKILRSEH (514 aa).

It belongs to the YME2 family.

It localises to the mitochondrion inner membrane. Functionally, plays a role in maintaining the mitochondrial genome and in controlling the mtDNA escape. Involved in the regulation of mtDNA nucleotide structure and number. May have a dispensable role in early maturation of pre-rRNA. The protein is Mitochondrial escape protein 2 (yme2) of Neosartorya fischeri (strain ATCC 1020 / DSM 3700 / CBS 544.65 / FGSC A1164 / JCM 1740 / NRRL 181 / WB 181) (Aspergillus fischerianus).